Here is a 43-residue protein sequence, read N- to C-terminus: Protein PsbN (43 aa).

Residues 7–27 (LSISIGVMVVAITGFSIYTAF) traverse the membrane as a helical segment.

It belongs to the PsbN family.

Its subcellular location is the cellular thylakoid membrane. In terms of biological role, may play a role in photosystem I and II biogenesis. The polypeptide is Protein PsbN (Trichodesmium erythraeum (strain IMS101)).